Reading from the N-terminus, the 618-residue chain is Matrix metalloproteinase-24 (618 aa).

The N-terminal stretch at 1–41 is a signal peptide; that stretch reads MPRSRGGRAAPGQAARWSGWRAPGRLLPLLPALCCLAAAAG. A propeptide spanning residues 42 to 128 is cleaved from the precursor; the sequence is AGKPAGADAP…HLSRRRRNKR (87 aa). The Extracellular segment spans residues 42 to 575; that stretch reads AGKPAGADAP…IDDVPGSVNA (534 aa). The Cysteine switch motif lies at 110–117; that stretch reads PRCGVPDH. Cys112 and His255 together coordinate Zn(2+). Residue Glu256 is part of the active site. The Zn(2+) site is built by His259 and His265. Positions 296 to 352 are disordered; sequence QKIYGPPAEPLEPTRPLPTLPVRRIHSPSERKHERQPRPPRPPLGDRPSTPGAKPNI. A compositionally biased stretch (pro residues) spans 302–314; sequence PAEPLEPTRPLPT. A compositionally biased stretch (basic and acidic residues) spans 322–332; sequence SPSERKHERQP. Hemopexin repeat units lie at residues 350–398, 399–444, 446–494, and 495–542; these read PNIC…WKGL, PARI…GSCL, REGI…KGIP, and QAPQ…WMGC. Cys353 and Cys542 form a disulfide bridge. A helical membrane pass occupies residues 576–596; it reads VAVVVPCTLSLCLLVLLYTIF. Topologically, residues 597 to 618 are cytoplasmic; it reads QFKNKTGPQPVTYYKRPVQEWV. The PDZ-binding motif lies at 616-618; that stretch reads EWV.

Belongs to the peptidase M10A family. In terms of assembly, interacts (via PDZ-binding motif) with APBA3 (via PDZ domain). Interacts with GRIP1 and GRIP2. Zn(2+) is required as a cofactor. Requires Ca(2+) as cofactor. Post-translationally, cleaved by a furin endopeptidase in the trans-Golgi network. Predominantly expressed in the nervous system: while enriched in the central nervous system, expression is also detected in the peripheral nervous system, including the trigeminal ganglion. Expression is not restricted to the nervous system: it is also enriched in the thymus, with a lower level of expression present in the aorta. In brain, high expression is present in the brain parenchyma, particularly within the neocortex.

It is found in the cell membrane. Its subcellular location is the golgi apparatus. The protein resides in the trans-Golgi network membrane. The protein localises to the secreted. It localises to the extracellular space. It is found in the extracellular matrix. Its function is as follows. Metalloprotease that mediates cleavage of N-cadherin (CDH2) and acts as a regulator of neuro-immune interactions and neural stem cell quiescence. Involved in cell-cell interactions between nociceptive neurites and mast cells, possibly by mediating cleavage of CDH2, thereby acting as a mediator of peripheral thermal nociception and inflammatory hyperalgesia. Key regulator of neural stem cells quiescence by mediating cleavage of CDH2, affecting CDH2-mediated anchorage of neural stem cells to ependymocytes in the adult subependymal zone, leading to modulate their quiescence. May play a role in axonal growth. Able to activate progelatinase A. May also be a proteoglycanase involved in degradation of proteoglycans, such as dermatan sulfate and chondroitin sulfate proteoglycans. Cleaves partially fibronectin, but not collagen type I, nor laminin. This Rattus norvegicus (Rat) protein is Matrix metalloproteinase-24 (Mmp24).